The primary structure comprises 2476 residues: Transcriptional regulator ATRX (2476 aa).

Residue K10 forms a Glycyl lysine isopeptide (Lys-Gly) (interchain with G-Cter in SUMO2) linkage. The tract at residues 24 to 154 is disordered; the sequence is HSSEESEETC…FRSRSKMKAD (131 aa). Phosphoserine is present on residues S25 and S34. The segment covering 40 to 57 has biased composition (polar residues); sequence MNQSTDKICGSGLNSDMM. Residues 58 to 72 show a composition bias toward basic and acidic residues; that stretch reads ENNKEEGASTSEKSR. Y89 carries the phosphotyrosine modification. Residue S92 is modified to Phosphoserine. A compositionally biased stretch (basic and acidic residues) spans 98-107; the sequence is TDENVNEKAA. Over residues 108–121 the composition is skewed to polar residues; that stretch reads TENSENDITMQSLP. S111 carries the phosphoserine modification. The span at 134 to 154 shows a compositional bias: basic and acidic residues; it reads NEDKDDFKGPEFRSRSKMKAD. Residues K137 and K141 each participate in a glycyl lysine isopeptide (Lys-Gly) (interchain with G-Cter in SUMO2) cross-link. Residues 158 to 295 form the ADD domain; it reads KRGEDGLHGI…LEQLLQQNKK (138 aa). The GATA-type; atypical zinc-finger motif lies at 169–205; that stretch reads SCTACGQQVNHFQKDSIYRHPSLKVLICKNCFKYYMS. Phosphoserine is present on S212. The PHD-type; atypical zinc-finger motif lies at 216–271; sequence DEQCRWCAEGGNLICCDFCHNAFCKKCILRNLGRKELSTIMDENNQWYCYICQPEP. K298 is covalently cross-linked (Glycyl lysine isopeptide (Lys-Gly) (interchain with G-Cter in SUMO2)). S315 is modified (phosphoserine). Disordered regions lie at residues 427 to 451, 466 to 507, and 525 to 568; these read EKNT…EKSY, SVKA…DLDM, and ESAM…NIKS. K439 participates in a covalent cross-link: Glycyl lysine isopeptide (Lys-Gly) (interchain with G-Cter in SUMO2). Residues 466–494 show a composition bias toward basic and acidic residues; the sequence is SVKAIDGEEQRAHKSTSGEHKGSGRKDGS. The span at 549 to 559 shows a compositional bias: polar residues; that stretch reads ESSSVKLNVSS. The PxVxL motif motif lies at 573–586; it reads KVRKELFVKLTPVS. The residue at position 583 (T583) is a Phosphothreonine. Disordered stretches follow at residues 585–877 and 893–1464; these read VSLS…GGSI and PGVS…GRKK. 7 positions are modified to phosphoserine: S586, S590, S626, S663, S665, S717, and S719. Positions 615–630 are enriched in basic and acidic residues; that stretch reads SSEKCRPREEISDHEN. The segment covering 732–746 has biased composition (polar residues); that stretch reads MGHSSSSDTDINEPQ. S766, S801, S828, S829, S854, S855, and S871 each carry phosphoserine. Over residues 819-849 the composition is skewed to basic and acidic residues; the sequence is SVPEKKEEDSSEDEKQGKKVVDNGGHERAKT. Residues 899-922 show a composition bias toward basic and acidic residues; that stretch reads GAEKPSVKEENVNSPEDKRVSKTK. The span at 923-937 shows a compositional bias: basic residues; it reads EKTKHLRSRQSRKGK. 2 positions are modified to phosphoserine: S941 and S953. A compositionally biased stretch (basic and acidic residues) spans 943 to 963; that stretch reads GTDRFPKKEQSDESSEGEKKQ. Over residues 964–973 the composition is skewed to basic residues; it reads SRQRPGTKGK. Over residues 974 to 988 the composition is skewed to basic and acidic residues; that stretch reads KAPDLKGETLKREQE. K984 is covalently cross-linked (Glycyl lysine isopeptide (Lys-Gly) (interchain with G-Cter in SUMO2)). S991, S992, S993, and S1041 each carry phosphoserine. Positions 1031 to 1061 are enriched in basic and acidic residues; it reads DKSCEKKEELSDSVDKLPGKGDSCDSSEDKK. Positions 1062–1074 are enriched in basic residues; it reads TRNRVSLREKKRF. R1063 is modified (citrulline). Composition is skewed to basic and acidic residues over residues 1083-1096 and 1103-1129; these read KRPE…EKSL and STEK…KEVK. The span at 1146–1175 shows a compositional bias: basic residues; it reads KQKKQRTSAKKKTGNTKEKKRNSLRATPKR. The interval 1169-1313 is interaction with DAXX; it reads LRATPKRKQV…VNQVNSESDS (145 aa). Phosphoserine is present on residues S1223, S1224, and S1232. Over residues 1246–1260 the composition is skewed to basic and acidic residues; that stretch reads PENRIAKKMLLEEIK. A compositionally biased stretch (acidic residues) spans 1265 to 1276; the sequence is SDEDGSSDDEPD. S1309, S1311, and S1313 each carry phosphoserine. Over residues 1321-1332 the composition is skewed to basic residues; it reads PRYRHRLLRHKL. Phosphoserine occurs at positions 1335 and 1339. Basic and acidic residues-rich tracts occupy residues 1340 to 1355 and 1395 to 1404; these read GEEK…EAKG and KKAELEENQR. Residues 1406–1415 are compositionally biased toward basic residues; the sequence is YKQKKKRRRI. Residues 1416–1436 show a composition bias toward basic and acidic residues; it reads KVQEDSSSENKSHSEEDKKEG. Acidic residues predominate over residues 1437 to 1453; sequence DEEDEEDEDEDEEDEND. K1473 participates in a covalent cross-link: Glycyl lysine isopeptide (Lys-Gly) (interchain with G-Cter in SUMO2). S1512 carries the phosphoserine modification. The residue at position 1514 (T1514) is a Phosphothreonine. A Helicase ATP-binding domain is found at 1566 to 1753; it reads KTKKSPGSGC…HCMVNFIKEN (188 aa). ATP is bound at residue 1579-1586; it reads HCMGLGKT. The short motif at 1704-1707 is the DEGH box element; sequence DEGH. A phosphoserine mark is found at S1891 and S1898. The segment at 1898 to 1982 is disordered; it reads SDSDETSKSL…STSNPSSPAP (85 aa). The segment covering 1902–1913 has biased composition (basic and acidic residues); the sequence is ETSKSLSSDEKK. Residue K1965 forms a Glycyl lysine isopeptide (Lys-Gly) (interchain with G-Cter in SUMO1); alternate linkage. A Glycyl lysine isopeptide (Lys-Gly) (interchain with G-Cter in SUMO2); alternate cross-link involves residue K1965. K1970 participates in a covalent cross-link: Glycyl lysine isopeptide (Lys-Gly) (interchain with G-Cter in SUMO2). The span at 1971–1982 shows a compositional bias: low complexity; sequence TTSTSNPSSPAP. Phosphoserine is present on residues S1975 and S1979. The segment at 1993-2263 is interaction with MECP2; it reads DAEVLEHSGK…RKAAWAEYEA (271 aa). The Helicase C-terminal domain occupies 2008 to 2188; the sequence is EILRMAEEIG…ERHFTMNELT (181 aa). S2203 bears the Phosphoserine mark. Residues 2445–2476 form a disordered region; that stretch reads SVAGGMQPPPLQRAPPPTVRSKNPGPSPGKSM. Residues 2451–2462 are compositionally biased toward pro residues; the sequence is QPPPLQRAPPPT. Omega-N-methylarginine occurs at positions 2457 and 2464.

It belongs to the SNF2/RAD54 helicase family. In terms of assembly, interacts with DAXX to form the chromatin remodeling complex ATRX:DAXX. Probably binds EZH2. Binds annexin V in a calcium and phosphatidylcholine/phosphatidylserine-dependent manner. Interacts directly with CBX5 via the PxVxL motif. Interacts with RAD50, MRE11 and NBN; indicative for an association with the MRN complex. Interacts with histone MACROH2A1. Interacts with histone H3 peptides methylated at 'Lys-10' with preferences H3K9me3 &gt; H3K9me2 &gt; H3K9me1. Interacts with histone H3 peptides unmethylated at 'Lys-5' (H3K4me0). Interacts with MECP2, SMC1 and SMC3. Interacts with SETDB1, TRIM28 and ZNF274. In terms of processing, citrullinated by PADI4.

Its subcellular location is the nucleus. The protein resides in the chromosome. The protein localises to the telomere. It is found in the PML body. It catalyses the reaction ATP + H2O = ADP + phosphate + H(+). Involved in transcriptional regulation and chromatin remodeling. Facilitates DNA replication in multiple cellular environments and is required for efficient replication of a subset of genomic loci. Binds to DNA tandem repeat sequences in both telomeres and euchromatin and in vitro binds DNA quadruplex structures. May help stabilizing G-rich regions into regular chromatin structures by remodeling G4 DNA and incorporating H3.3-containing nucleosomes. Catalytic component of the chromatin remodeling complex ATRX:DAXX which has ATP-dependent DNA translocase activity and catalyzes the replication-independent deposition of histone H3.3 in pericentric DNA repeats outside S-phase and telomeres, and the in vitro remodeling of H3.3-containing nucleosomes. Its heterochromatin targeting is proposed to involve a combinatorial readout of histone H3 modifications (specifically methylation states of H3K9 and H3K4) and association with CBX5. Involved in maintaining telomere structural integrity in embryonic stem cells probably implying recruitment of CBX5 to telomeres. Reports on the involvement in transcriptional regulation of telomeric repeat-containing RNA (TERRA) are conflicting; according is required for its transcriptional repression in embryonic stem cells. Acts as a negative regulator of chromatin incorporation of transcriptionally repressive histone MACROH2A1, particularily at telomeres. Participates in the allele-specific gene expression at the imprinted IGF2/H19 gene locus. On the maternal allele, required for the chromatin occupancy of SMC1 and CTCTF within the H19 imprinting control region (ICR) and involved in esatblishment of histone tails modifications in the ICR. Binds to zinc-finger coding genes with atypical chromatin signatures and regulates its H3K9me3 levels. Forms a complex with ZNF274, TRIM28 and SETDB1 to facilitate the deposition and maintenance of H3K9me3 at the 3' exons of zinc-finger genes. This is Transcriptional regulator ATRX (Atrx) from Mus musculus (Mouse).